A 177-amino-acid chain; its full sequence is Large ribosomal subunit protein uL5 (177 aa).

It belongs to the universal ribosomal protein uL5 family. Part of the 50S ribosomal subunit; part of the 5S rRNA/L5/L18/L25 subcomplex. Contacts the 5S rRNA and the P site tRNA. Forms a bridge to the 30S subunit in the 70S ribosome.

This is one of the proteins that bind and probably mediate the attachment of the 5S RNA into the large ribosomal subunit, where it forms part of the central protuberance. In the 70S ribosome it contacts protein S13 of the 30S subunit (bridge B1b), connecting the 2 subunits; this bridge is implicated in subunit movement. Contacts the P site tRNA; the 5S rRNA and some of its associated proteins might help stabilize positioning of ribosome-bound tRNAs. The chain is Large ribosomal subunit protein uL5 from Ehrlichia chaffeensis (strain ATCC CRL-10679 / Arkansas).